The following is a 202-amino-acid chain: LexA repressor (202 aa).

The H-T-H motif DNA-binding region spans 28-48 (RAEIAQELGFKSPNAAEEHLK). Catalysis depends on for autocatalytic cleavage activity residues S123 and K160.

Belongs to the peptidase S24 family. As to quaternary structure, homodimer.

The enzyme catalyses Hydrolysis of Ala-|-Gly bond in repressor LexA.. Functionally, represses a number of genes involved in the response to DNA damage (SOS response), including recA and lexA. In the presence of single-stranded DNA, RecA interacts with LexA causing an autocatalytic cleavage which disrupts the DNA-binding part of LexA, leading to derepression of the SOS regulon and eventually DNA repair. The chain is LexA repressor from Pseudomonas chlororaphis (Pseudomonas aureofaciens).